The following is a 332-amino-acid chain: MVTYKDSGVNIEEGYKSVKLMKDYASKTFIPGVINNLGSFAGMFEIGSGYKNPVLVSGTDGVGTKLAVAFATKKYDTVGIDCTAMCVNDILCHGAKPVFFLDYIACGKLEAEVASDLVKGVSEGCSQAGCALIGGETAEMPGFYKEGEYDLAGFAVGLVDKDKIIDGSKIEDGNVLIGIASSGIHSNGYSLVRKLITDFNEEFNGKKIGEVLLTPTKIYVKPVLKVLESFDVKGMAHITGGGFYENIPRMFKGDFTAVINKESLEIPEIFKHIMSLGVDENHAFNTFNMGIGFVICAAKEDKDGIIASLKESGEKAYEIGYVKAGGSGVCIK.

It belongs to the AIR synthase family.

The protein localises to the cytoplasm. The catalysed reaction is 2-formamido-N(1)-(5-O-phospho-beta-D-ribosyl)acetamidine + ATP = 5-amino-1-(5-phospho-beta-D-ribosyl)imidazole + ADP + phosphate + H(+). The protein operates within purine metabolism; IMP biosynthesis via de novo pathway; 5-amino-1-(5-phospho-D-ribosyl)imidazole from N(2)-formyl-N(1)-(5-phospho-D-ribosyl)glycinamide: step 2/2. In Clostridium acetobutylicum (strain ATCC 824 / DSM 792 / JCM 1419 / IAM 19013 / LMG 5710 / NBRC 13948 / NRRL B-527 / VKM B-1787 / 2291 / W), this protein is Phosphoribosylformylglycinamidine cyclo-ligase.